We begin with the raw amino-acid sequence, 385 residues long: Trans-enoyl reductase poxH (385 aa).

Residue 64 to 67 participates in NADP(+) binding; sequence QPYS. 156–163 is a substrate binding site; that stretch reads PDPAAPPI. Residues 199–202, 223–226, Y241, and 289–290 contribute to the NADP(+) site; these read STSV, SGTD, and LG. 309–313 provides a ligand contact to substrate; that stretch reads HMAPL. 372–373 provides a ligand contact to NADP(+); that stretch reads KR.

Belongs to the zinc-containing alcohol dehydrogenase family. In terms of assembly, monomer.

It functions in the pathway secondary metabolite biosynthesis. Trans-enoyl reductase; part of the gene cluster that mediates the biosynthesis of oxaleimides, cytotoxic compounds containing an unusual disubstituted succinimide moiety. The first step of the pathway is provided by the HR-PKS poxF that serves in a new mode of collaborative biosynthesis with the PKS-NRPS poxE, by providing the olefin containing amino acid substrate via the synthesis of an ACP-bound dec-4-enoate. The cytochrome P450 monooxygenase poxM-catalyzed oxidation at the alpha-position creates the enzyme-bound 2-hydroxydec-4-enoyl-ACP thioester, which may be prone to spontaneous hydrolysis to yield 2-hydroxydec-4-enoic acid due to increased electrophilicity of the carbonyl. 2-hydroxydec-4-enoic acid can then be further oxidized by poxM to yield the alpha-ketoacid 2-oxodec-4-enoicacid, which is reductively aminated by the aminotransferase poxL to yield (S,E)-2-aminodec-4-enoic acid. The Hybrid PKS-NRPS synthetase poxE then performs condensation between the octaketide product of its PKS modules and the amino group of (S,E)-2-aminodec-4-enoic acid which is activated and incorporated by the adenylation domain. The resulting aminoacyl product can be cyclized by the Diels-Alderase PoxQ and reductively released by the reductive (R) domain of poxE to yield an aldehyde intermediate. The released aldehyde is then substrate for a Knoevenagel condensation by the hydrolyase poxO followed by an oxidation at the 5-position of the pyrrolidone ring. The presence of the olefin from the amino acid building block allows for migration of the substituted allyl group to occur. This allylic transposition reaction takes place in a conjugate addition, semipinacol-like fashion to yield a succinimide intermediate. Iterative two-electron oxidations of the C7 methyl of the succinimide intermediate to the carboxylic acid can be catalyzed by one of two remaining cytochrome P450 monooxygenasess poxC or poxD to yield oxaleimide A. Subsequent oxidation yields the maleimide scaffold oxaleimide I. Both oxaleimide A and oxaleimide I can undergo oxidative modifications in the decalin ring to yield the series of products oxaleimides B to H. The chain is Trans-enoyl reductase poxH from Penicillium oxalicum.